The chain runs to 429 residues: Cleavage stimulation factor subunit 50 (429 aa).

The segment at 20–41 (LNALIVAHLRHHNLSQVASAVA) is hydrophobic. WD repeat units lie at residues 121–160 (EHKS…QMIS), 174–213 (DHAE…AKRA), 218–257 (QDTH…CFLP), 264–303 (GVSG…CVRS), 308–347 (HGKS…MVKE), 351–392 (AKRV…KVAK), and 396–429 (NHNG…KESV).

Homodimer. Belongs to the CSTF complex. Forms a complex with cleavage and polyadenylation specificity factor (CPSF) subunits CSTF64, PABN3, CPSF30, FIPS5 and CPSF100.

The protein localises to the nucleus. Functionally, one of the multiple factors required for polyadenylation and 3'-end cleavage of pre-mRNAs. May be responsible for the interaction of CSTF with other factors to form a stable complex on the pre-mRNA. This is Cleavage stimulation factor subunit 50 from Arabidopsis thaliana (Mouse-ear cress).